The sequence spans 358 residues: Peptide chain release factor 1 (358 aa).

N5-methylglutamine is present on Gln-236.

Belongs to the prokaryotic/mitochondrial release factor family. Methylated by PrmC. Methylation increases the termination efficiency of RF1.

The protein resides in the cytoplasm. Its function is as follows. Peptide chain release factor 1 directs the termination of translation in response to the peptide chain termination codons UAG and UAA. In Corynebacterium aurimucosum (strain ATCC 700975 / DSM 44827 / CIP 107346 / CN-1) (Corynebacterium nigricans), this protein is Peptide chain release factor 1.